A 259-amino-acid polypeptide reads, in one-letter code: Putative protein-tyrosine sulfotransferase (259 aa).

Cys-13 and Cys-68 are disulfide-bonded. Glu-16 functions as the Proton donor/acceptor in the catalytic mechanism. Asn-36 carries N-linked (GlcNAc...) asparagine glycosylation. Residues Arg-95, Ser-103, and Arg-107 each contribute to the 3'-phosphoadenylyl sulfate site. Asn-115 carries an N-linked (GlcNAc...) asparagine glycan. Cysteines 137 and 144 form a disulfide. 3'-phosphoadenylyl sulfate contacts are provided by residues Tyr-149 and 194–203 (SASQVKNSIN).

This sequence belongs to the protein sulfotransferase family.

The enzyme catalyses L-tyrosyl-[protein] + 3'-phosphoadenylyl sulfate = O-sulfo-L-tyrosine-[protein] + adenosine 3',5'-bisphosphate + H(+). Its function is as follows. Catalyzes the O-sulfation of tyrosine residues within acidic motifs of polypeptides, using 3'-phosphoadenylyl sulfate (PAPS) as cosubstrate. The chain is Putative protein-tyrosine sulfotransferase (tpst-2) from Caenorhabditis elegans.